The sequence spans 358 residues: Peptide chain release factor 1 (358 aa).

An N5-methylglutamine modification is found at Q233.

Belongs to the prokaryotic/mitochondrial release factor family. Methylated by PrmC. Methylation increases the termination efficiency of RF1.

The protein localises to the cytoplasm. In terms of biological role, peptide chain release factor 1 directs the termination of translation in response to the peptide chain termination codons UAG and UAA. The polypeptide is Peptide chain release factor 1 (Beijerinckia indica subsp. indica (strain ATCC 9039 / DSM 1715 / NCIMB 8712)).